The following is a 167-amino-acid chain: Effector CFEM8 (167 aa).

Residues 1–17 form the signal peptide; it reads MQFSIVVMAALASLASA. Residues 18 to 112 form the CFEM domain; that stretch reads QSMDGIPTCA…TPAAAAPYPT (95 aa). Intrachain disulfides connect cysteine 26/cysteine 68, cysteine 30/cysteine 63, cysteine 40/cysteine 47, and cysteine 49/cysteine 85. Aspartate 44 is a binding site for heme. N-linked (GlcNAc...) asparagine glycosylation is found at asparagine 117 and asparagine 135. Glycine 143 carries the GPI-anchor amidated glycine lipid modification. Residues 144–167 constitute a propeptide, removed in mature form; that stretch reads SAPQNVAGGLAGIFGLVVAAAFAL.

Belongs to the RBT5 family.

It is found in the cell membrane. Its subcellular location is the secreted. It localises to the host nucleus. The protein localises to the host cell membrane. In terms of biological role, appears to function during host infection, and may play a role in suppressing the host immune response. The chain is Effector CFEM8 from Marssonina brunnea f. sp. multigermtubi (strain MB_m1) (Marssonina leaf spot fungus).